The following is a 119-amino-acid chain: uncharacterized protein (119 aa).

The disordered stretch occupies residues 78–119; the sequence is SHRKSQQHQTQGNQVLRGTRKLESPTVGPRPGLRRQHTRNFL. A compositionally biased stretch (polar residues) spans 84–93; sequence QHQTQGNQVL. Positions 109–119 are enriched in basic residues; the sequence is GLRRQHTRNFL.

This is an uncharacterized protein from Saccharomyces cerevisiae (strain ATCC 204508 / S288c) (Baker's yeast).